An 86-amino-acid polypeptide reads, in one-letter code: Large ribosomal subunit protein bL27 (86 aa).

The tract at residues Met-1–Ser-26 is disordered.

This sequence belongs to the bacterial ribosomal protein bL27 family.

The sequence is that of Large ribosomal subunit protein bL27 from Rickettsia prowazekii (strain Madrid E).